We begin with the raw amino-acid sequence, 836 residues long: uncharacterized protein (836 aa).

Disordered regions lie at residues 1 to 25, 692 to 718, and 789 to 836; these read MDST…NEEE, DSRS…NNQR, and ESSG…GYAS. 2 stretches are compositionally biased toward polar residues: residues 789–799 and 825–836; these read ESSGINVSNTR and IDSSSAQNGYAS.

Its subcellular location is the nucleus. This is an uncharacterized protein from Schizosaccharomyces pombe (strain 972 / ATCC 24843) (Fission yeast).